A 79-amino-acid chain; its full sequence is Acyl carrier protein (79 aa).

Residues Ala-4–Lys-79 form the Carrier domain. Residue Ser-39 is modified to O-(pantetheine 4'-phosphoryl)serine.

Belongs to the acyl carrier protein (ACP) family. Post-translationally, 4'-phosphopantetheine is transferred from CoA to a specific serine of apo-ACP by AcpS. This modification is essential for activity because fatty acids are bound in thioester linkage to the sulfhydryl of the prosthetic group.

It localises to the cytoplasm. Its pathway is lipid metabolism; fatty acid biosynthesis. Functionally, carrier of the growing fatty acid chain in fatty acid biosynthesis. The protein is Acyl carrier protein of Chlorobaculum parvum (strain DSM 263 / NCIMB 8327) (Chlorobium vibrioforme subsp. thiosulfatophilum).